We begin with the raw amino-acid sequence, 152 residues long: FMN reductase (NADH) RutF (152 aa).

This sequence belongs to the non-flavoprotein flavin reductase family. RutF subfamily.

The catalysed reaction is FMNH2 + NAD(+) = FMN + NADH + 2 H(+). In terms of biological role, catalyzes the reduction of FMN to FMNH2 which is used to reduce pyrimidine by RutA via the Rut pathway. This chain is FMN reductase (NADH) RutF, found in Shigella flexneri.